Here is a 1127-residue protein sequence, read N- to C-terminus: WD repeat and HMG-box DNA-binding protein 1 (1127 aa).

7 WD repeats span residues 11–50 (GHPE…DPKS), 52–91 (SIGE…GILT), 92–131 (RFTT…QQKT), 134–173 (GHSA…CEAV), 184–223 (FNAK…NICT), 228–267 (FITQ…CLER), and 271–310 (EKGY…DVKQ). 2 disordered regions span residues 811–1013 (AAEQ…AENK) and 1064–1127 (KAKG…FKKE). Over residues 819–829 (QNEEEDEEEED) the composition is skewed to acidic residues. Residues 846 to 857 (GDSRAKPVKQDQ) are compositionally biased toward basic and acidic residues. A compositionally biased stretch (acidic residues) spans 858–877 (YEENNEEEMEEEEKEQEEAL). Polar residues-rich tracts occupy residues 881–891 (TPTANPFNKSV) and 918–937 (SASQ…TSIL). Residues 948 to 960 (SASGSPSTSKSDS) are compositionally biased toward low complexity. A DNA-binding region (HMG box) is located at residues 1013–1076 (KKPKTGFQLW…GDYPGEDGAD (64 aa)). A compositionally biased stretch (polar residues) spans 1087–1100 (NMASNGCPQENTDS).

Homodimer. As to expression, found in oocytes and in various other cells.

The protein localises to the nucleus. It is found in the nucleoplasm. Its subcellular location is the cytoplasm. Its function is as follows. Core replisome component that acts as a replication initiation factor. Binds directly to the CMG complex and functions as a hub to recruit additional proteins to the replication fork. The polypeptide is WD repeat and HMG-box DNA-binding protein 1 (wdhd1) (Xenopus laevis (African clawed frog)).